The sequence spans 413 residues: Phosphoglycerate kinase (413 aa).

Substrate is bound by residues 19–21, R34, 57–60, R114, and R154; these read DLN and HQSK. Residues E332 and 358–361 contribute to the ATP site; that span reads GGHS.

It belongs to the phosphoglycerate kinase family. In terms of assembly, monomer.

The protein localises to the cytoplasm. It catalyses the reaction (2R)-3-phosphoglycerate + ATP = (2R)-3-phospho-glyceroyl phosphate + ADP. It functions in the pathway carbohydrate degradation; glycolysis; pyruvate from D-glyceraldehyde 3-phosphate: step 2/5. The sequence is that of Phosphoglycerate kinase from Thermococcus sibiricus (strain DSM 12597 / MM 739).